The sequence spans 188 residues: Elongation factor P (188 aa).

The residue at position 34 (lysine 34) is an N6-(3,6-diaminohexanoyl)-5-hydroxylysine.

It belongs to the elongation factor P family. Post-translationally, may be beta-lysylated on the epsilon-amino group of Lys-34 by the combined action of EpmA and EpmB, and then hydroxylated on the C5 position of the same residue by EpmC (if this protein is present). Lysylation is critical for the stimulatory effect of EF-P on peptide-bond formation. The lysylation moiety may extend toward the peptidyltransferase center and stabilize the terminal 3-CCA end of the tRNA. Hydroxylation of the C5 position on Lys-34 may allow additional potential stabilizing hydrogen-bond interactions with the P-tRNA.

It localises to the cytoplasm. It functions in the pathway protein biosynthesis; polypeptide chain elongation. In terms of biological role, involved in peptide bond synthesis. Alleviates ribosome stalling that occurs when 3 or more consecutive Pro residues or the sequence PPG is present in a protein, possibly by augmenting the peptidyl transferase activity of the ribosome. Modification of Lys-34 is required for alleviation. The sequence is that of Elongation factor P from Coxiella burnetii (strain CbuG_Q212) (Coxiella burnetii (strain Q212)).